The primary structure comprises 91 residues: MAHKKAGGSSRNGRDSDGRRLGVKKFGGEAVIGGNIIVRQRGTKWHPGSNVGIGKDHTLFALTAGQVFFQTKANGRSYISVIPPKAAEAAE.

The tract at residues Met1–Gly22 is disordered.

This sequence belongs to the bacterial ribosomal protein bL27 family.

This Beijerinckia indica subsp. indica (strain ATCC 9039 / DSM 1715 / NCIMB 8712) protein is Large ribosomal subunit protein bL27.